The sequence spans 432 residues: 3-phosphoshikimate 1-carboxyvinyltransferase (432 aa).

Residues K21, S22, and R26 each contribute to the 3-phosphoshikimate site. A phosphoenolpyruvate-binding site is contributed by K21. Residues G93 and R121 each coordinate phosphoenolpyruvate. Residues S166, Q168, D318, and K345 each coordinate 3-phosphoshikimate. Residue Q168 coordinates phosphoenolpyruvate. D318 functions as the Proton acceptor in the catalytic mechanism. Residues R349 and R391 each contribute to the phosphoenolpyruvate site.

Belongs to the EPSP synthase family. Monomer.

Its subcellular location is the cytoplasm. It carries out the reaction 3-phosphoshikimate + phosphoenolpyruvate = 5-O-(1-carboxyvinyl)-3-phosphoshikimate + phosphate. It participates in metabolic intermediate biosynthesis; chorismate biosynthesis; chorismate from D-erythrose 4-phosphate and phosphoenolpyruvate: step 6/7. In terms of biological role, catalyzes the transfer of the enolpyruvyl moiety of phosphoenolpyruvate (PEP) to the 5-hydroxyl of shikimate-3-phosphate (S3P) to produce enolpyruvyl shikimate-3-phosphate and inorganic phosphate. This chain is 3-phosphoshikimate 1-carboxyvinyltransferase, found in Persephonella marina (strain DSM 14350 / EX-H1).